The primary structure comprises 644 residues: Exoribonuclease 2 (644 aa).

The RNB domain occupies 189–516; it reads RQDLTALNFV…NHRLLKAVIK (328 aa). The S1 motif domain maps to 561–643; the sequence is NTRFAAEIID…ETRSIIARPA (83 aa).

The protein belongs to the RNR ribonuclease family. RNase II subfamily.

It is found in the cytoplasm. It carries out the reaction Exonucleolytic cleavage in the 3'- to 5'-direction to yield nucleoside 5'-phosphates.. Functionally, involved in mRNA degradation. Hydrolyzes single-stranded polyribonucleotides processively in the 3' to 5' direction. The chain is Exoribonuclease 2 from Salmonella paratyphi B (strain ATCC BAA-1250 / SPB7).